The following is a 122-amino-acid chain: Large ribosomal subunit protein uL14 (122 aa).

It belongs to the universal ribosomal protein uL14 family. Part of the 50S ribosomal subunit. Forms a cluster with proteins L3 and L19. In the 70S ribosome, L14 and L19 interact and together make contacts with the 16S rRNA in bridges B5 and B8.

Its function is as follows. Binds to 23S rRNA. Forms part of two intersubunit bridges in the 70S ribosome. The sequence is that of Large ribosomal subunit protein uL14 from Streptococcus pneumoniae (strain JJA).